A 471-amino-acid polypeptide reads, in one-letter code: Probable nucleoredoxin 3 (471 aa).

Thioredoxin domains follow at residues 15–173 and 179–334; these read VSIP…ARRQ and QLLG…KERD.

It belongs to the nucleoredoxin family.

It carries out the reaction [protein]-dithiol + NAD(+) = [protein]-disulfide + NADH + H(+). It catalyses the reaction [protein]-dithiol + NADP(+) = [protein]-disulfide + NADPH + H(+). Probable thiol-disulfide oxidoreductase that may participate in various redox reactions. The protein is Probable nucleoredoxin 3 of Oryza sativa subsp. japonica (Rice).